The primary structure comprises 102 residues: Large ribosomal subunit protein uL24 (102 aa).

The protein belongs to the universal ribosomal protein uL24 family. In terms of assembly, part of the 50S ribosomal subunit.

Functionally, one of two assembly initiator proteins, it binds directly to the 5'-end of the 23S rRNA, where it nucleates assembly of the 50S subunit. One of the proteins that surrounds the polypeptide exit tunnel on the outside of the subunit. This chain is Large ribosomal subunit protein uL24, found in Rhizobium leguminosarum bv. trifolii (strain WSM2304).